The chain runs to 948 residues: UvrABC system protein A (948 aa).

42-49 (GLSGSGKS) is an ATP binding site. The C4-type zinc finger occupies 262 to 289 (CPVCSYSLPELEPRLFSFNNPMGSCPTC). ABC transporter domains lie at 319-596 (WDKR…ENSV) and 616-945 (VNPG…KYLK). 649–656 (GVSGSGKS) provides a ligand contact to ATP. A C4-type zinc finger spans residues 748–774 (CEACQGDGVIKVEMHFLPDVYVPCEVC).

Belongs to the ABC transporter superfamily. UvrA family. In terms of assembly, forms a heterotetramer with UvrB during the search for lesions.

Its subcellular location is the cytoplasm. Functionally, the UvrABC repair system catalyzes the recognition and processing of DNA lesions. UvrA is an ATPase and a DNA-binding protein. A damage recognition complex composed of 2 UvrA and 2 UvrB subunits scans DNA for abnormalities. When the presence of a lesion has been verified by UvrB, the UvrA molecules dissociate. The protein is UvrABC system protein A of Neisseria meningitidis serogroup A / serotype 4A (strain DSM 15465 / Z2491).